We begin with the raw amino-acid sequence, 229 residues long: ATP-dependent Clp protease proteolytic subunit (229 aa).

S101 (nucleophile) is an active-site residue. Residue H126 is part of the active site.

Belongs to the peptidase S14 family. Component of the chloroplastic Clp protease core complex.

It localises to the plastid. It is found in the chloroplast stroma. The enzyme catalyses Hydrolysis of proteins to small peptides in the presence of ATP and magnesium. alpha-casein is the usual test substrate. In the absence of ATP, only oligopeptides shorter than five residues are hydrolyzed (such as succinyl-Leu-Tyr-|-NHMec, and Leu-Tyr-Leu-|-Tyr-Trp, in which cleavage of the -Tyr-|-Leu- and -Tyr-|-Trp bonds also occurs).. Its function is as follows. Cleaves peptides in various proteins in a process that requires ATP hydrolysis. Has a chymotrypsin-like activity. Plays a major role in the degradation of misfolded proteins. This Mesostigma viride (Green alga) protein is ATP-dependent Clp protease proteolytic subunit.